We begin with the raw amino-acid sequence, 88 residues long: Small ribosomal subunit protein uS15 (88 aa).

Belongs to the universal ribosomal protein uS15 family. As to quaternary structure, part of the 30S ribosomal subunit. Forms a bridge to the 50S subunit in the 70S ribosome, contacting the 23S rRNA.

Functionally, one of the primary rRNA binding proteins, it binds directly to 16S rRNA where it helps nucleate assembly of the platform of the 30S subunit by binding and bridging several RNA helices of the 16S rRNA. In terms of biological role, forms an intersubunit bridge (bridge B4) with the 23S rRNA of the 50S subunit in the ribosome. This Mesoplasma florum (strain ATCC 33453 / NBRC 100688 / NCTC 11704 / L1) (Acholeplasma florum) protein is Small ribosomal subunit protein uS15.